The chain runs to 225 residues: Membrane protein (225 aa).

Residues 1-20 (MSNETNCTLDFEQSVQLFKE) are Virion surface-facing. N-linked (GlcNAc...) asparagine; by host glycans are attached at residues asparagine 3 and asparagine 6. A helical transmembrane segment spans residues 21–41 (YNLFITAFLLFLTIILQYGYA). Over 42 to 51 (TRSKVIYTLK) the chain is Intravirion. Residues 52–72 (MIVLWCFWPLNIAVGVISCIY) traverse the membrane as a helical segment. At 73–77 (PPNTG) the chain is on the virion surface side. The helical transmembrane segment at 78–98 (GLVAAIILTVFACLSFVGYWI) threads the bilayer. Residues 99–225 (QSIRLFKRCR…VATGGSSLYT (127 aa)) are Intravirion-facing.

It belongs to the gammacoronaviruses M protein family. As to quaternary structure, homomultimer. Interacts with envelope E protein in the budding compartment of the host cell, which is located between endoplasmic reticulum and the Golgi complex. Forms a complex with HE and S proteins. Interacts with nucleocapsid N protein. This interaction probably participates in RNA packaging into the virus.

It is found in the virion membrane. The protein resides in the host Golgi apparatus membrane. Functionally, component of the viral envelope that plays a central role in virus morphogenesis and assembly via its interactions with other viral proteins. This chain is Membrane protein, found in Gallus gallus (Chicken).